Reading from the N-terminus, the 422-residue chain is WD repeat and SOCS box-containing protein 1 (422 aa).

5 WD repeats span residues 124 to 165 (SRCV…LLLN), 168 to 208 (DHTE…NMMK), 212 to 251 (GHQN…MIRK), 254 to 293 (GHYN…ILFE), and 309 to 346 (DNGR…SYPV). An SOCS box domain is found at 374 to 422 (NAYFWSTPKYVSSLQHLCRMAIRRVMNTNEVKKLPIPQKIMEFLTYQTM).

In terms of assembly, component of a probable ECS E3 ubiquitin-protein ligase complex that contains the Elongin BC complex.

The protein operates within protein modification; protein ubiquitination. In terms of biological role, probable substrate-recognition component of a SCF-like ECS (Elongin-Cullin-SOCS-box protein) E3 ubiquitin-protein ligase complex which mediates the ubiquitination and subsequent proteasomal degradation of target proteins. The protein is WD repeat and SOCS box-containing protein 1 (wsb1) of Xenopus tropicalis (Western clawed frog).